The primary structure comprises 166 residues: Transcriptional repressor NrdR (166 aa).

A zinc finger spans residues 3 to 34; it reads CIKCGNMEDKVIDSRPIKEGKSIRRRRECLRC. Residues 49-139 enclose the ATP-cone domain; that stretch reads LFVKKRNGSI…VYCKFHDAKD (91 aa).

Belongs to the NrdR family. Zn(2+) serves as cofactor.

In terms of biological role, negatively regulates transcription of bacterial ribonucleotide reductase nrd genes and operons by binding to NrdR-boxes. This is Transcriptional repressor NrdR from Methylacidiphilum infernorum (isolate V4) (Methylokorus infernorum (strain V4)).